The primary structure comprises 117 residues: Transcription elongation factor SPT4-B (117 aa).

The interval 1–40 is interaction with SUPT5H; it reads MALETVPKDLRHLRACLLCSLVKTIDQFEYDGCDNCDAYL. Residues 16 to 36 form a C4-type zinc finger; that stretch reads CLLCSLVKTIDQFEYDGCDNC.

Belongs to the SPT4 family. As to quaternary structure, interacts with SUPT5H to form DSIF. DSIF interacts with the positive transcription elongation factor b complex (P-TEFb complex), which is composed of CDK9 and cyclin-T (CCNT1 or CCNT2). DSIF interacts with RNA polymerase II, and this interaction is reduced by phosphorylation of the C-terminal domain (CTD) of POLR2A by P-TEFb. DSIF also interacts with the NELF complex, which is composed of WHSC2/NELFA, COBRA1/NELFB, TH1L/NELFD and RDBP/NELFE, and this interaction occurs following prior binding of DSIF to RNA polymerase II. DSIF also interacts with HRMT1L2/PRMT1, HTATSF1/TATSF1, RNGTT/CAP1A, SKB1/PRMT5, SUPT6H, and can interact with PIN1. In terms of processing, ubiquitinated by Ubr5 when not assembled in the DSIF complex, leading to its degradation: Ubr5 recognizes and binds a degron that is not accessible when Supt4h1b is part of the DSIF complex. Expressed in brain, heart and liver.

Its subcellular location is the nucleus. Functionally, component of the DRB sensitivity-inducing factor complex (DSIF complex), which regulates mRNA processing and transcription elongation by RNA polymerase II. DSIF positively regulates mRNA capping by stimulating the mRNA guanylyltransferase activity of RNGTT/CAP1A. DSIF also acts cooperatively with the negative elongation factor complex (NELF complex) to enhance transcriptional pausing at sites proximal to the promoter. Transcriptional pausing may facilitate the assembly of an elongation competent RNA polymerase II complex. DSIF and NELF promote pausing by inhibition of the transcription elongation factor TFIIS/S-II. TFIIS/S-II binds to RNA polymerase II at transcription pause sites and stimulates the weak intrinsic nuclease activity of the enzyme. Cleavage of blocked transcripts by RNA polymerase II promotes the resumption of transcription from the new 3' terminus and may allow repeated attempts at transcription through natural pause sites. The sequence is that of Transcription elongation factor SPT4-B (Supt4h1b) from Mus musculus (Mouse).